We begin with the raw amino-acid sequence, 465 residues long: ATP synthase subunit beta (465 aa).

ATP is bound at residue 148-155 (GGAGVGKT).

This sequence belongs to the ATPase alpha/beta chains family. F-type ATPases have 2 components, CF(1) - the catalytic core - and CF(0) - the membrane proton channel. CF(1) has five subunits: alpha(3), beta(3), gamma(1), delta(1), epsilon(1). CF(0) has three main subunits: a(1), b(2) and c(9-12). The alpha and beta chains form an alternating ring which encloses part of the gamma chain. CF(1) is attached to CF(0) by a central stalk formed by the gamma and epsilon chains, while a peripheral stalk is formed by the delta and b chains.

The protein localises to the cell inner membrane. The catalysed reaction is ATP + H2O + 4 H(+)(in) = ADP + phosphate + 5 H(+)(out). Produces ATP from ADP in the presence of a proton gradient across the membrane. The catalytic sites are hosted primarily by the beta subunits. The protein is ATP synthase subunit beta of Neisseria gonorrhoeae (strain ATCC 700825 / FA 1090).